The following is a 367-amino-acid chain: Outer membrane protein P2 (367 aa).

The signal sequence occupies residues 1–20; sequence MKKTLAALIVGAFAASAANA.

It belongs to the Gram-negative porin family. In terms of assembly, homotrimer.

Its subcellular location is the cell outer membrane. Its function is as follows. Forms pores that allow passive diffusion of small molecules across the outer membrane. This is Outer membrane protein P2 (ompP2) from Haemophilus influenzae.